Here is a 351-residue protein sequence, read N- to C-terminus: sn-glycerol-3-phosphate import ATP-binding protein UgpC (351 aa).

Residues 4-234 (ITLKDLVKSY…PATLFVAGFI (231 aa)) enclose the ABC transporter domain. ATP is bound at residue 36-43 (GPSGCGKS).

The protein belongs to the ABC transporter superfamily. sn-glycerol-3-phosphate importer (TC 3.A.1.1.3) family. As to quaternary structure, the complex is composed of two ATP-binding proteins (UgpC), two transmembrane proteins (UgpA and UgpE) and a solute-binding protein (UgpB).

It localises to the cell inner membrane. It catalyses the reaction sn-glycerol 3-phosphate(out) + ATP + H2O = sn-glycerol 3-phosphate(in) + ADP + phosphate + H(+). Part of the ABC transporter complex UgpBAEC involved in sn-glycerol-3-phosphate (G3P) import. Responsible for energy coupling to the transport system. The chain is sn-glycerol-3-phosphate import ATP-binding protein UgpC from Ruegeria sp. (strain TM1040) (Silicibacter sp.).